The chain runs to 154 residues: Ribosomal RNA-processing protein 14-N (154 aa).

The disordered stretch occupies residues 36-154; that stretch reads WKQKKSTLEE…KHKASPRAGF (119 aa). Serine 80 carries the post-translational modification Phosphoserine. Phosphothreonine is present on threonine 83. Basic and acidic residues predominate over residues 105 to 133; that stretch reads QDLREKRKAGDLNQKRQNKRPVENEKDSQ. Residues 140-154 show a composition bias toward basic residues; it reads KVQKKKHKASPRAGF.

It belongs to the SURF6 family.

The protein localises to the nucleus. It localises to the nucleolus. Involved in ribosome biogenesis and cell polarity. Required for the synthesis of both 40S and 60S ribosomal subunits and may also play some direct role in correct positioning of the mitotic spindle during mitosis. The polypeptide is Ribosomal RNA-processing protein 14-N (rrp14n) (Schizosaccharomyces pombe (strain 972 / ATCC 24843) (Fission yeast)).